The sequence spans 786 residues: Pentatricopeptide repeat-containing protein 10, chloroplastic (786 aa).

A disordered region spans residues 1-71; sequence MEATGRGLFP…HQTPTPPHSF (71 aa). The transit peptide at 1–95 directs the protein to the chloroplast; sequence MEATGRGLFP…HPLPTLAAFL (95 aa). Pro residues predominate over residues 27–36; it reads PAAPPPPSPS. Positions 37–50 are enriched in low complexity; sequence SLPLDSLLLHLTAP. 18 PPR repeats span residues 137–167, 173–207, 208–243, 244–278, 279–313, 314–348, 349–383, 384–418, 419–453, 454–488, 489–523, 524–558, 560–594, 595–629, 630–664, 666–700, 701–735, and 736–770; these read DASA…TPLP, DVRA…GVAP, TLVT…GVEP, DGFT…GHAP, CVVT…GCQP, DAVT…GLLP, NAFT…GFVP, NVNT…GCTP, NRVT…GVEL, SRDT…GFTP, CITT…GFKP, NEQS…GAVF, SWVI…GYNP, DLVI…GLSP, DLIT…QTMK, DVVS…GMAP, CAVT…GLKP, and MELT…DLDF.

It belongs to the PPR family. P subfamily. As to quaternary structure, forms homodimers.

It is found in the plastid. The protein localises to the chloroplast stroma. Involved in chloroplast mRNA stability. Binds specifically to two intergenic RNA regions of similar sequence located in the chloroplast atpH 5'-UTR and psaJ 3'-UTR, and serves as a barrier to RNA decay. Binding to a specific site in the intergenic region of the chloroplast atpH is sufficient to block 5'-3' and 3'-5' exonucleases. Acts as a protein barrier to block mRNA degradation by exonucleases, and defines processed mRNA termini in chloroplasts. Remodels the structure of the atpH ribosome-binding site in a manner that can account for its ability to enhance translation. Stabilizes a RNA 3'-end downstream from psaI. Binds atpH RNA as a monomer. In Zea mays (Maize), this protein is Pentatricopeptide repeat-containing protein 10, chloroplastic.